Reading from the N-terminus, the 151-residue chain is Transcriptional repressor NrdR (151 aa).

A zinc finger spans residues 3 to 34; that stretch reads CPFCHNDQSRVIDSRVIDSGSAIRRRRECTQC. Positions 46 to 136 constitute an ATP-cone domain; it reads LLVVKRNGLT…VYKSFESADD (91 aa).

It belongs to the NrdR family. Zn(2+) serves as cofactor.

In terms of biological role, negatively regulates transcription of bacterial ribonucleotide reductase nrd genes and operons by binding to NrdR-boxes. The protein is Transcriptional repressor NrdR of Corynebacterium diphtheriae (strain ATCC 700971 / NCTC 13129 / Biotype gravis).